The chain runs to 25 residues: Ocellatin-K1 (25 aa).

Position 25 is an isoleucine amide (isoleucine 25).

Expressed by the skin glands.

The protein localises to the secreted. Its function is as follows. Has hemolytic and antibacterial activity. This is Ocellatin-K1 from Leptodactylus knudseni (Knudsen's thin-toed frog).